The chain runs to 333 residues: MIDTTLPLTDIHRHLDGNIRPQTILELGRRYNISLPAQSLETLIPHVQVIANEPDLVSFLTKLDWGVKVLASLDACRRVAFENIEDAARNGLHYVELRFSPGYMAMAHQLPVAGVVEAVIDGVREGCRTFGVQAKLIGIMSRTFGEAACQQELEAFLAHRDQITALDLAGDELGFPGSLFLSHFNRARDADWHITVHAGEAAGPESIWQAIRELGAERIGHGVKAIEDRALMDFLAEQQIGIESCLTSNIQTSTVAELAAHPLKMFLEHGIRASINTDDPGVQGVDIIHEYTVAAPAAGLSREQIRQAQINGLEMAFLSAEEKRALREKVAAK.

Positions 12 and 14 each coordinate Zn(2+). Residues His-14, Asp-16, and Gly-170 each coordinate substrate. His-197 provides a ligand contact to Zn(2+). The active-site Proton donor is Glu-200. Asp-278 is a Zn(2+) binding site. A substrate-binding site is contributed by Asp-279.

This sequence belongs to the metallo-dependent hydrolases superfamily. Adenosine and AMP deaminases family. Adenosine deaminase subfamily. Zn(2+) serves as cofactor.

It carries out the reaction adenosine + H2O + H(+) = inosine + NH4(+). It catalyses the reaction 2'-deoxyadenosine + H2O + H(+) = 2'-deoxyinosine + NH4(+). Catalyzes the hydrolytic deamination of adenosine and 2-deoxyadenosine. The sequence is that of Adenosine deaminase from Escherichia coli (strain SMS-3-5 / SECEC).